Reading from the N-terminus, the 1178-residue chain is DNA-directed RNA polymerase subunit beta' (1178 aa).

Residues Cys60, Cys62, Cys75, and Cys78 each coordinate Zn(2+). The Mg(2+) site is built by Asp450, Asp452, and Asp454. Zn(2+) contacts are provided by Cys795, Cys869, Cys876, and Cys879.

This sequence belongs to the RNA polymerase beta' chain family. As to quaternary structure, the RNAP catalytic core consists of 2 alpha, 1 beta, 1 beta' and 1 omega subunit. When a sigma factor is associated with the core the holoenzyme is formed, which can initiate transcription. The cofactor is Mg(2+). Requires Zn(2+) as cofactor.

The enzyme catalyses RNA(n) + a ribonucleoside 5'-triphosphate = RNA(n+1) + diphosphate. Functionally, DNA-dependent RNA polymerase catalyzes the transcription of DNA into RNA using the four ribonucleoside triphosphates as substrates. The polypeptide is DNA-directed RNA polymerase subunit beta' (Clostridium botulinum (strain Okra / Type B1)).